Reading from the N-terminus, the 490-residue chain is 3-octaprenyl-4-hydroxybenzoate carboxy-lyase (490 aa).

Asn172 contacts Mn(2+). Prenylated FMN contacts are provided by residues 175-177, 189-191, and 194-195; these read IYR, RWL, and RG. Position 238 (Glu238) interacts with Mn(2+). Catalysis depends on Asp287, which acts as the Proton donor.

It belongs to the UbiD family. In terms of assembly, homohexamer. Prenylated FMN is required as a cofactor. Requires Mn(2+) as cofactor.

It localises to the cell membrane. It carries out the reaction a 4-hydroxy-3-(all-trans-polyprenyl)benzoate + H(+) = a 2-(all-trans-polyprenyl)phenol + CO2. It functions in the pathway cofactor biosynthesis; ubiquinone biosynthesis. Functionally, catalyzes the decarboxylation of 3-octaprenyl-4-hydroxy benzoate to 2-octaprenylphenol, an intermediate step in ubiquinone biosynthesis. This Idiomarina loihiensis (strain ATCC BAA-735 / DSM 15497 / L2-TR) protein is 3-octaprenyl-4-hydroxybenzoate carboxy-lyase.